The primary structure comprises 464 residues: Chitobiosyldiphosphodolichol beta-mannosyltransferase (464 aa).

Residues 1 to 2 (MA) are Lumenal-facing. A helical transmembrane segment spans residues 3–23 (ASCLVLLALCLLLPLLLLGGW). The Cytoplasmic segment spans residues 24–99 (KRWRRGRAAR…ELQSLAVGPR (76 aa)). Positions 100-120 (VFQYGVKVVLQAMYLLWKLMW) form an intramembrane region, helical. The Cytoplasmic segment spans residues 121 to 464 (REPGAYIFLQ…QTVLPLVMDT (344 aa)). At serine 242 the chain carries Phosphoserine. Residues 243–262 (PFRARSEPEDPVTERSAFTE) form a disordered region.

It belongs to the glycosyltransferase group 1 family. Glycosyltransferase 33 subfamily.

The protein localises to the endoplasmic reticulum membrane. It carries out the reaction an N,N'-diacetylchitobiosyl-diphospho-di-trans,poly-cis-dolichol + GDP-alpha-D-mannose = a beta-D-Man-(1-&gt;4)-beta-D-GlcNAc-(1-&gt;4)-alpha-D-GlcNAc-diphospho-di-trans,poly-cis-dolichol + GDP + H(+). Its pathway is protein modification; protein glycosylation. Mannosyltransferase that operates in the biosynthetic pathway of dolichol-linked oligosaccharides, the glycan precursors employed in protein asparagine (N)-glycosylation. The assembly of dolichol-linked oligosaccharides begins on the cytosolic side of the endoplasmic reticulum membrane and finishes in its lumen. The sequential addition of sugars to dolichol pyrophosphate produces dolichol-linked oligosaccharides containing fourteen sugars, including two GlcNAcs, nine mannoses and three glucoses. Once assembled, the oligosaccharide is transferred from the lipid to nascent proteins by oligosaccharyltransferases. Catalyzes, on the cytoplasmic face of the endoplasmic reticulum, the addition of the first mannose residues to the dolichol-linked oligosaccharide chain, to produce Man1GlcNAc(2)-PP-dolichol core oligosaccharide. Man1GlcNAc(2)-PP-dolichol is a substrate for ALG2, the following enzyme in the biosynthetic pathway. The sequence is that of Chitobiosyldiphosphodolichol beta-mannosyltransferase from Homo sapiens (Human).